The primary structure comprises 757 residues: Inhibitor of nuclear factor kappa-B kinase subunit beta (757 aa).

The region spanning 15-300 (WEMKERLGTG…DPQYGPNGCF (286 aa)) is the Protein kinase domain. ATP is bound by residues 21 to 29 (LGTGGFGNV) and Lys44. Asp145 serves as the catalytic Proton acceptor. A Glycyl lysine isopeptide (Lys-Gly) (interchain with G-Cter in ubiquitin) cross-link involves residue Lys163. Ser177 is modified (phosphoserine; by TBK1 and PKC/PRKCZ). Cys179 bears the S-nitrosocysteine mark. Ser181 carries the post-translational modification Phosphoserine; by TBK1, PKC/PRKCZ and PDPK1. Pro191 is modified (hydroxyproline). The leucine-zipper stretch occupies residues 458-479 (LLRNNSCLSKMKNAMASTAQQL). At Ser670 the chain carries Phosphoserine; by autocatalysis. Ser672 carries the phosphoserine modification. Ser675, Ser682, Ser689, Ser692, Ser697, Ser705, Ser733, and Ser740 each carry phosphoserine; by autocatalysis. A disordered region spans residues 682–703 (SHPGHLMSQPSSACDSLPDSDK). The NEMO-binding stretch occupies residues 737-742 (LDWSWL).

Belongs to the protein kinase superfamily. Ser/Thr protein kinase family. I-kappa-B kinase subfamily. Component of the I-kappa-B-kinase (IKK) core complex consisting of CHUK, IKBKB and IKBKG; probably four alpha/CHUK-beta/IKBKB dimers are associated with four gamma/IKBKG subunits. The IKK core complex seems to associate with regulatory or adapter proteins to form a IKK-signalosome holo-complex. The IKK complex associates with TERF2IP/RAP1, leading to promote IKK-mediated phosphorylation of RELA/p65. Part of a complex composed of NCOA2, NCOA3, CHUK/IKKA, IKBKB, IKBKG and CREBBP. Part of a 70-90 kDa complex at least consisting of CHUK/IKKA, IKBKB, NFKBIA, RELA, ELP1 and MAP3K14. Found in a membrane raft complex, at least composed of BCL10, CARD11, DPP4 and IKBKB. Interacts with SQSTM1 through PRKCZ or PRKCI. Forms an NGF-induced complex with IKBKB, PRKCI and TRAF6. May interact with MAVS/IPS1. Interacts with NALP2. Interacts with TICAM1. Interacts with FAF1; the interaction disrupts the IKK complex formation. Interacts with ATM. Part of a ternary complex consisting of TANK, IKBKB and IKBKG. Interacts with NIBP; the interaction is direct. Interacts with ARRB1 and ARRB2. Interacts with TRIM21. Interacts with NLRC5; prevents IKBKB phosphorylation and kinase activity. Interacts with PDPK1. Interacts with EIF2AK2/PKR. The phosphorylated form interacts with PPM1A and PPM1B. Interacts with ZNF268 isoform 2; the interaction is further increased in a TNF-alpha-dependent manner. Interacts with IKBKE. Interacts with ZC3H12A. Interacts with AKAP13. Interacts with LRRC14; disrupts IKBKB-IKBKG interaction preventing I-kappa-B-kinase (IKK) core complex formation and leading to a decrease of IKBKB phosphorylation and NF-kappaB activation. Interacts with SASH1. Interacts with ARFIP2. Interacts with FKBP5. Upon cytokine stimulation, phosphorylated on Ser-177 and Ser-181 by MEKK1 and/or MAP3K14/NIK as well as TBK1 and PRKCZ; which enhances activity. Phosphorylated by MAP3K7/TAK1 in response to NOD1 and NOD2 signaling, promoting activation and phosphorylation of NF-kappa-B inhibitors, leading to NF-kappa-B activation. Once activated, autophosphorylates on the C-terminal serine cluster; which decreases activity and prevents prolonged activation of the inflammatory response. Phosphorylated by the IKK-related kinases TBK1 and IKBKE, which is associated with reduced CHUK/IKKA and IKBKB activity and NF-kappa-B-dependent gene transcription. Dephosphorylated at Ser-177 and Ser-181 by PPM1A and PPM1B. Post-translationally, ubiquitinated. Monoubiquitination involves TRIM21 that leads to inhibition of Tax-induced NF-kappa-B signaling. 'Ser-163' may not serve as a monoubiquitination site. Ubiquitination on 'Ser-163' may modulate phosphorylation on C-terminal serine residues. In terms of processing, hydroxylated by PHD1/EGLN2, loss of hydroxylation under hypoxic conditions results in activation of NF-kappa-B.

The protein localises to the cytoplasm. It is found in the nucleus. It localises to the membrane raft. The enzyme catalyses L-seryl-[I-kappa-B protein] + ATP = O-phospho-L-seryl-[I-kappa-B protein] + ADP + H(+). The catalysed reaction is L-seryl-[protein] + ATP = O-phospho-L-seryl-[protein] + ADP + H(+). It carries out the reaction L-threonyl-[protein] + ATP = O-phospho-L-threonyl-[protein] + ADP + H(+). Its function is as follows. Serine kinase that plays an essential role in the NF-kappa-B signaling pathway which is activated by multiple stimuli such as inflammatory cytokines, bacterial or viral products, DNA damages or other cellular stresses. Acts as a part of the canonical IKK complex in the conventional pathway of NF-kappa-B activation. Phosphorylates inhibitors of NF-kappa-B on 2 critical serine residues. These modifications allow polyubiquitination of the inhibitors and subsequent degradation by the proteasome. In turn, free NF-kappa-B is translocated into the nucleus and activates the transcription of hundreds of genes involved in immune response, growth control, or protection against apoptosis. In addition to the NF-kappa-B inhibitors, phosphorylates several other components of the signaling pathway including NEMO/IKBKG, NF-kappa-B subunits RELA and NFKB1, as well as IKK-related kinases TBK1 and IKBKE. IKK-related kinase phosphorylations may prevent the overproduction of inflammatory mediators since they exert a negative regulation on canonical IKKs. Phosphorylates FOXO3, mediating the TNF-dependent inactivation of this pro-apoptotic transcription factor. Also phosphorylates other substrates including NAA10, NCOA3, BCL10 and IRS1. Phosphorylates RIPK1 at 'Ser-25' which represses its kinase activity and consequently prevents TNF-mediated RIPK1-dependent cell death. Phosphorylates the C-terminus of IRF5, stimulating IRF5 homodimerization and translocation into the nucleus. The polypeptide is Inhibitor of nuclear factor kappa-B kinase subunit beta (Ikbkb) (Rattus norvegicus (Rat)).